The sequence spans 388 residues: MLTYLTAGESHGPQGTAIIEGIPAGLAIDVDQINADLASRQGGYGRGSRQQIEHDQVEILGGVRHGLTLGSPITLVVKNRDHAHWSSIMHPTSPATAENTLRKVERPRPGHADLVGGMKYRHRDLRNVLERSSARETAIRVAVGNVCKQLLAALGVTLVGYVQAIGPVDTDLTKPQTVSEIKDAITQNNLRILAQDRVAELHDLIDQTRRAGDTLGGWIRVVVNGMPAGIGSYVSWDTKLDGQLAAAVMGVNAMKGVSIGDGFEISRHPGSQGMDEISHDADGYHRLSNHLGGLEGGMTNGMPLIINAAMKPIPTLYKALKTVNVVTKEVEKASVERSDTTAIVPASIVIENVVAIELAKALTNSFNADNLARLQEQLAAYREELRGY.

NADP(+)-binding residues include arginine 40 and arginine 46. Residues 131–133, 252–253, glycine 296, 311–315, and arginine 337 each bind FMN; these read RSS, NA, and KPIPT.

It belongs to the chorismate synthase family. As to quaternary structure, homotetramer. It depends on FMNH2 as a cofactor.

It catalyses the reaction 5-O-(1-carboxyvinyl)-3-phosphoshikimate = chorismate + phosphate. The protein operates within metabolic intermediate biosynthesis; chorismate biosynthesis; chorismate from D-erythrose 4-phosphate and phosphoenolpyruvate: step 7/7. Catalyzes the anti-1,4-elimination of the C-3 phosphate and the C-6 proR hydrogen from 5-enolpyruvylshikimate-3-phosphate (EPSP) to yield chorismate, which is the branch point compound that serves as the starting substrate for the three terminal pathways of aromatic amino acid biosynthesis. This reaction introduces a second double bond into the aromatic ring system. The protein is Chorismate synthase of Limosilactobacillus fermentum (strain NBRC 3956 / LMG 18251) (Lactobacillus fermentum).